The following is a 78-amino-acid chain: ATP synthase subunit a (78 aa).

A helical membrane pass occupies residues 34-54; it reads LTNIGLYLTIGIFLILTYSLL.

This sequence belongs to the ATPase A chain family. As to quaternary structure, F-type ATPases have 2 components, CF(1) - the catalytic core - and CF(0) - the membrane proton channel. CF(1) has five subunits: alpha(3), beta(3), gamma(1), delta(1), epsilon(1). CF(0) has three main subunits: a, b and c.

It localises to the mitochondrion inner membrane. Functionally, mitochondrial membrane ATP synthase (F(1)F(0) ATP synthase or Complex V) produces ATP from ADP in the presence of a proton gradient across the membrane which is generated by electron transport complexes of the respiratory chain. F-type ATPases consist of two structural domains, F(1) - containing the extramembraneous catalytic core and F(0) - containing the membrane proton channel, linked together by a central stalk and a peripheral stalk. During catalysis, ATP synthesis in the catalytic domain of F(1) is coupled via a rotary mechanism of the central stalk subunits to proton translocation. Key component of the proton channel; it may play a direct role in the translocation of protons across the membrane. The sequence is that of ATP synthase subunit a (atp6) from Aspergillus amstelodami.